Consider the following 229-residue polypeptide: MSADPRLILPLDLSSVSEARAMVETLGDAVSFYKIGLELLATDGMALARQLKGEGKQIFLDWKLHDIGATVERSARVLAGAGCDLLTVHAEPQVMAAAVKAKGGSDLKILAVTVLTSLTDADLIELGYAFSARDLVARRIRQAIEAGVDGVVSSPQEAALAREIAGPDFLVVTPGVRPFWSAKNDQARAATPADALKAGASHLVCGRPITAANDPREAALKVVGEMAGL.

Substrate is bound by residues D12, K34, 61-70 (DWKLHDIGAT), T116, R177, Q186, G206, and R207. K63 serves as the catalytic Proton donor.

This sequence belongs to the OMP decarboxylase family. Type 1 subfamily. As to quaternary structure, homodimer.

The catalysed reaction is orotidine 5'-phosphate + H(+) = UMP + CO2. Its pathway is pyrimidine metabolism; UMP biosynthesis via de novo pathway; UMP from orotate: step 2/2. Functionally, catalyzes the decarboxylation of orotidine 5'-monophosphate (OMP) to uridine 5'-monophosphate (UMP). This Caulobacter sp. (strain K31) protein is Orotidine 5'-phosphate decarboxylase.